A 131-amino-acid polypeptide reads, in one-letter code: Large ribosomal subunit protein eL32 (131 aa).

The segment at 39 to 77 (LGEKWRRPKGRHSKMRRKLKSKPKMPNPGYGSPKKVRGL) is disordered. Residues 44 to 61 (RRPKGRHSKMRRKLKSKP) are compositionally biased toward basic residues.

It belongs to the eukaryotic ribosomal protein eL32 family.

The sequence is that of Large ribosomal subunit protein eL32 (rpl32) from Methanopyrus kandleri (strain AV19 / DSM 6324 / JCM 9639 / NBRC 100938).